The chain runs to 286 residues: Putative L-ribulose-5-phosphate 3-epimerase SgbU (286 aa).

It belongs to the L-ribulose-5-phosphate 3-epimerase family.

The catalysed reaction is L-ribulose 5-phosphate = L-xylulose 5-phosphate. Its function is as follows. Catalyzes the isomerization of L-xylulose-5-phosphate to L-ribulose-5-phosphate (Potential). May be involved in the utilization of 2,3-diketo-L-gulonate. In Escherichia coli (strain K12), this protein is Putative L-ribulose-5-phosphate 3-epimerase SgbU (sgbU).